The following is a 320-amino-acid chain: SUN domain-containing protein 3 (320 aa).

Residues 1–6 (MLTRSW) lie on the Nuclear side of the membrane. The helical transmembrane segment at 7 to 29 (KIILSTVFISTFLLVGLLNHQWL) threads the bilayer. The Perinuclear space portion of the chain corresponds to 30–320 (KETEFPQKPR…RVHGIPSDYT (291 aa)). A coiled-coil region spans residues 63-102 (KEQQELLKKESQTLENNFREILFLIEQIDVLKALLKDMKD). The region spanning 156-317 (GASVIEAGTS…YRFRVHGIPS (162 aa)) is the SUN domain.

In terms of assembly, self-associates. Interacts with SYNE1 and SPAG4/SUN4. Proposed to form a spermatogenesis-specific LINC complex with SYNE1 during sperm head formation possibly implicating a SUN domain-based heterotrimer with SPAG4/SUN4 associating with SYNE1. Can interact with SYNE3; the interaction is questioned by missing colocalization in spermatids. As to expression, specifically expressed in testis (at protein level).

It is found in the membrane. Its subcellular location is the nucleus envelope. The protein resides in the nucleus inner membrane. As a probable component of the LINC (LInker of Nucleoskeleton and Cytoskeleton) complex, involved in the connection between the nuclear lamina and the cytoskeleton. The nucleocytoplasmic interactions established by the LINC complex play an important role in the transmission of mechanical forces across the nuclear envelope and in nuclear movement and positioning. May be involved in nuclear remodeling during sperm head formation in spermatogenesis. A probable SUN3:SYNE1 LINC complex may tether spermatid nuclei to posterior cytoskeletal structures such as the manchette. In Mus musculus (Mouse), this protein is SUN domain-containing protein 3 (Sun3).